Consider the following 433-residue polypeptide: G2/mitotic-specific cyclin-B1 (433 aa).

The disordered stretch occupies residues 19 to 47 (INMAGAKRVPTAPAATSKPGLRPRTALGD). The residue at position 73 (Lys-73) is an N6-acetyllysine. The tract at residues 93 to 116 (PVSEPVPEPEPEPEPEPVKEEKLS) is disordered. Phosphoserine; by CDK1 is present on Ser-126. Ser-128 is modified (phosphoserine). Ser-133 bears the Phosphoserine; by PLK1 mark. Ser-147 is modified (phosphoserine). Interaction with CDK2 stretches follow at residues 169-177 (EYVKDIYAY) and 258-261 (YEEM). Position 321 is a phosphothreonine (Thr-321).

This sequence belongs to the cyclin family. Cyclin AB subfamily. As to quaternary structure, interacts with the CDC2 protein kinase to form a serine/threonine kinase holoenzyme complex also known as maturation promoting factor (MPF). The cyclin subunit imparts substrate specificity to the complex. Binds HEI10. Interacts with catalytically active RALBP1 and CDC2 during mitosis to form an endocytotic complex during interphase. Interacts with CCNF; interaction is required for nuclear localization. Interacts with CDK5RAP3. Interacts with RFPL4A and UBE2A. Interacts with INCA1. Post-translationally, ubiquitinated by the SCF(NIPA) complex during interphase, leading to its destruction. Deubiquitinated by USP22 during G2/M phase. Phosphorylated by PLK1 at Ser-133 on centrosomes during prophase: phosphorylation by PLK1 does not cause nuclear import. Phosphorylation at Ser-147 was also reported to be mediated by PLK1 but Ser-133 seems to be the primary phosphorylation site.

Its subcellular location is the cytoplasm. It localises to the nucleus. The protein resides in the cytoskeleton. The protein localises to the microtubule organizing center. It is found in the centrosome. Its function is as follows. Essential for the control of the cell cycle at the G2/M (mitosis) transition. This Homo sapiens (Human) protein is G2/mitotic-specific cyclin-B1 (CCNB1).